The sequence spans 236 residues: 15,16-dihydrobiliverdin:ferredoxin oxidoreductase (236 aa).

This sequence belongs to the HY2 family.

The enzyme catalyses 15,16-dihydrobiliverdin + oxidized 2[4Fe-4S]-[ferredoxin] = biliverdin IXalpha + reduced 2[4Fe-4S]-[ferredoxin] + 2 H(+). Functionally, catalyzes the two-electron reduction of biliverdin IX-alpha at the C15 methine bridge. The sequence is that of 15,16-dihydrobiliverdin:ferredoxin oxidoreductase (pebA) from Synechococcus sp. (strain WH8020).